A 198-amino-acid polypeptide reads, in one-letter code: MIKLIVGLGNPGAEYEATRHNAGFWLVDQLARMGGATLRVEGRFHGLAARARLWDQEVWLLKPSTFMNRSGLAVVSLARFYKILPDEIVVVHDEMDLPAGSAKLKRGGGAGGHNGLKDISAHLGTQDYWRLRLGVGHPRNAPGGAGAGREDVVNFVLKPPRREEQEAIDAALDRCIEPLGLLARGDAERAMAQLHTAR.

Tyr15 contacts tRNA. The active-site Proton acceptor is the His20. TRNA is bound by residues Phe66, Asn68, and Asn114.

The protein belongs to the PTH family. Monomer.

It is found in the cytoplasm. The enzyme catalyses an N-acyl-L-alpha-aminoacyl-tRNA + H2O = an N-acyl-L-amino acid + a tRNA + H(+). Its function is as follows. Hydrolyzes ribosome-free peptidyl-tRNAs (with 1 or more amino acids incorporated), which drop off the ribosome during protein synthesis, or as a result of ribosome stalling. In terms of biological role, catalyzes the release of premature peptidyl moieties from peptidyl-tRNA molecules trapped in stalled 50S ribosomal subunits, and thus maintains levels of free tRNAs and 50S ribosomes. This Cupriavidus taiwanensis (strain DSM 17343 / BCRC 17206 / CCUG 44338 / CIP 107171 / LMG 19424 / R1) (Ralstonia taiwanensis (strain LMG 19424)) protein is Peptidyl-tRNA hydrolase.